Reading from the N-terminus, the 252-residue chain is NLP effector protein Pc118356 (252 aa).

A signal peptide spans 1–17; that stretch reads MALTVLAATALTALIMG. Asn-20 and Asn-67 each carry an N-linked (GlcNAc...) asparagine glycan. The short motif at 121–127 is the Hepta-peptide GHRHDWE motif element; it reads QDRHFWE. Asn-166 carries N-linked (GlcNAc...) asparagine glycosylation.

It belongs to the Necrosis inducing protein (NPP1) family.

It localises to the secreted. Functionally, secreted effector that contributes strongly to virulence during infection by P.capsici. The polypeptide is NLP effector protein Pc118356 (Phytophthora capsici).